Here is a 167-residue protein sequence, read N- to C-terminus: Peptide deformylase (167 aa).

Positions 91 and 133 each coordinate Fe cation. E134 is an active-site residue. H137 is a binding site for Fe cation.

Belongs to the polypeptide deformylase family. Fe(2+) serves as cofactor.

The enzyme catalyses N-terminal N-formyl-L-methionyl-[peptide] + H2O = N-terminal L-methionyl-[peptide] + formate. Its function is as follows. Removes the formyl group from the N-terminal Met of newly synthesized proteins. Requires at least a dipeptide for an efficient rate of reaction. N-terminal L-methionine is a prerequisite for activity but the enzyme has broad specificity at other positions. This chain is Peptide deformylase, found in Neisseria meningitidis serogroup C (strain 053442).